Reading from the N-terminus, the 354-residue chain is Uroporphyrinogen decarboxylase (354 aa).

Residues 25–29 (RQAGR), phenylalanine 44, aspartate 75, tyrosine 152, threonine 207, and histidine 330 contribute to the substrate site.

Belongs to the uroporphyrinogen decarboxylase family. As to quaternary structure, homodimer.

The protein localises to the cytoplasm. The enzyme catalyses uroporphyrinogen III + 4 H(+) = coproporphyrinogen III + 4 CO2. It functions in the pathway porphyrin-containing compound metabolism; protoporphyrin-IX biosynthesis; coproporphyrinogen-III from 5-aminolevulinate: step 4/4. Functionally, catalyzes the decarboxylation of four acetate groups of uroporphyrinogen-III to yield coproporphyrinogen-III. This is Uroporphyrinogen decarboxylase from Xanthomonas axonopodis pv. citri (strain 306).